The sequence spans 76 residues: Putative cation transport regulator ChaB (76 aa).

It belongs to the ChaB family. Monomer.

Might be a regulator of the sodium-potassium/proton antiporter ChaA. In Escherichia coli O157:H7, this protein is Putative cation transport regulator ChaB.